A 206-amino-acid chain; its full sequence is Ras-related protein RABG3a (206 aa).

G15–T22 is a binding site for GTP. Positions Y37 to F45 match the Effector region motif. GTP is bound by residues D63–Q67, N125–D128, and S158–A159. Residues C204 and C206 are each lipidated (S-geranylgeranyl cysteine). C206 carries the cysteine methyl ester modification.

The protein belongs to the small GTPase superfamily. Rab family.

The protein resides in the cell membrane. Functionally, intracellular vesicle trafficking and protein transport. The polypeptide is Ras-related protein RABG3a (RABG3A) (Arabidopsis thaliana (Mouse-ear cress)).